Consider the following 212-residue polypeptide: uncharacterized protein (212 aa).

The next 4 helical transmembrane spans lie at 34–54 (IFGI…PAPG), 59–79 (FGVL…ELWL), 126–146 (ILMG…IPGT), and 171–191 (AGMI…YVFF).

To R.meliloti ExoD.

Its subcellular location is the cell membrane. This is an uncharacterized protein from Synechocystis sp. (strain ATCC 27184 / PCC 6803 / Kazusa).